The chain runs to 421 residues: Vinorine synthase (421 aa).

Active-site proton acceptor residues include His-160 and Asp-362.

The protein belongs to the plant acyltransferase family. As to quaternary structure, monomer. Mainly expressed in roots and, to a lower level, in leaves.

It carries out the reaction 16-epivellosimine + acetyl-CoA = vinorine + CoA. It participates in alkaloid biosynthesis; ajmaline biosynthesis. With respect to regulation, complete inhibition by 4-(2-aminoethyl)-benzenesulfonyl fluoride (AEBSF), N-tosyl-L-phenylalanine chloromethylketone (TPCK), Hg(2+) and diethyl-pyrocarbonate (DEPC). 50% inhibition by N-(N-(L-3-trans-carboxirane-2-carbonyl)-L-leucyl)-agmanitine (E-64), N-alpha-p-tosyl-L-lysine chloromethylketone (TLCK) and phenylmethylsulfonyl fluoride (PMSF). Acetyltransferase involved in the biosynthesis of ajmaline-type monoterpenoid indole alkaloids (MIAs) natural products, important plant-derived pharmaceuticals used in the therapy of heart disorders. Catalyzes the conversion of 16-epivellosimine to vinorine, precursor of vomilenine, an intermediate chemical in the biosynthesis of ajmaline. Acts on gardneral, but not on polyneuridine aldehyde or N-methylgardneral. This is Vinorine synthase from Rauvolfia serpentina (Serpentine wood).